Here is a 100-residue protein sequence, read N- to C-terminus: Aspartyl/glutamyl-tRNA(Asn/Gln) amidotransferase subunit C (100 aa).

Belongs to the GatC family. Heterotrimer of A, B and C subunits.

The catalysed reaction is L-glutamyl-tRNA(Gln) + L-glutamine + ATP + H2O = L-glutaminyl-tRNA(Gln) + L-glutamate + ADP + phosphate + H(+). It catalyses the reaction L-aspartyl-tRNA(Asn) + L-glutamine + ATP + H2O = L-asparaginyl-tRNA(Asn) + L-glutamate + ADP + phosphate + 2 H(+). Functionally, allows the formation of correctly charged Asn-tRNA(Asn) or Gln-tRNA(Gln) through the transamidation of misacylated Asp-tRNA(Asn) or Glu-tRNA(Gln) in organisms which lack either or both of asparaginyl-tRNA or glutaminyl-tRNA synthetases. The reaction takes place in the presence of glutamine and ATP through an activated phospho-Asp-tRNA(Asn) or phospho-Glu-tRNA(Gln). This chain is Aspartyl/glutamyl-tRNA(Asn/Gln) amidotransferase subunit C, found in Staphylococcus epidermidis (strain ATCC 35984 / DSM 28319 / BCRC 17069 / CCUG 31568 / BM 3577 / RP62A).